The following is a 208-amino-acid chain: Sec-independent protein translocase protein TatB (208 aa).

A helical transmembrane segment spans residues 1–21; sequence MFDIGVGELTLIAVVALVVLG. A disordered region spans residues 188–208; it reads DAGTPAASMPSAPAKIQEKQP.

It belongs to the TatB family. In terms of assembly, the Tat system comprises two distinct complexes: a TatABC complex, containing multiple copies of TatA, TatB and TatC subunits, and a separate TatA complex, containing only TatA subunits. Substrates initially bind to the TatABC complex, which probably triggers association of the separate TatA complex to form the active translocon.

It localises to the cell inner membrane. In terms of biological role, part of the twin-arginine translocation (Tat) system that transports large folded proteins containing a characteristic twin-arginine motif in their signal peptide across membranes. Together with TatC, TatB is part of a receptor directly interacting with Tat signal peptides. TatB may form an oligomeric binding site that transiently accommodates folded Tat precursor proteins before their translocation. This Xanthomonas axonopodis pv. citri (strain 306) protein is Sec-independent protein translocase protein TatB.